Reading from the N-terminus, the 243-residue chain is Segregation and condensation protein A (243 aa).

The protein belongs to the ScpA family. In terms of assembly, component of a cohesin-like complex composed of ScpA, ScpB and the Smc homodimer, in which ScpA and ScpB bind to the head domain of Smc. The presence of the three proteins is required for the association of the complex with DNA.

Its subcellular location is the cytoplasm. Functionally, participates in chromosomal partition during cell division. May act via the formation of a condensin-like complex containing Smc and ScpB that pull DNA away from mid-cell into both cell halves. The chain is Segregation and condensation protein A from Staphylococcus haemolyticus (strain JCSC1435).